We begin with the raw amino-acid sequence, 282 residues long: Tyrosine recombinase XerA (282 aa).

Positions Glu-2–Gly-79 constitute a Core-binding (CB) domain. Positions Ser-95–Glu-271 constitute a Tyr recombinase domain. Residues Arg-132, Lys-157, His-223, Arg-226, and His-249 contribute to the active site. Tyr-258 serves as the catalytic O-(3'-phospho-DNA)-tyrosine intermediate.

The protein belongs to the 'phage' integrase family. XerA subfamily.

Its subcellular location is the cytoplasm. Its function is as follows. Site-specific tyrosine recombinase, which acts by catalyzing the cutting and rejoining of the recombining DNA molecules. The protein is Tyrosine recombinase XerA of Thermococcus onnurineus (strain NA1).